The sequence spans 348 residues: LIM domain-containing protein unc-97 (348 aa).

LIM zinc-binding domains are found at residues 21–73 (CVRC…CEHD), 82–132 (CGKC…CREC), 146–196 (CHKC…CLRC), 205–255 (CGAC…CEQH), and 264–315 (CFKC…CKRC).

As to quaternary structure, interacts with unc-98. Component of an integrin containing attachment complex, composed of at least pat-2, pat-3, pat-4, pat-6, unc-52, unc-97 and unc-112. Restricted to tissue types that attach to the hypodermis, specifically body wall muscles, vulval muscles, and mechanosensory neurons.

It localises to the cell junction. Its subcellular location is the adherens junction. The protein resides in the nucleus. In terms of biological role, component of an integrin containing attachment complex, which is required for muscle development and maintenance. Probably function in adherens junction. Affects the structural integrity of the integrin containing muscle adherens junctions and contributes to the mechanosensory functions of touch neurons. This is LIM domain-containing protein unc-97 from Caenorhabditis elegans.